The sequence spans 188 residues: MMHPVASSNPAFCGPGKPSCLNEDAMRAADQFDIYSSQQNKYSHTVSHKPMVCQRQDPLNETHLQTAGGRSIEIKDELKKKKNLNRSGKRGRPSGTTKSAGYRTSTGRPLGTTKAAGFKTSPGRPLGTTKAAGYKVSPGRPPGSIKALSRLADLGYGCGTAAFPYPMIHGRAVHGVEETSSEIKPPNE.

Ser37 bears the Phosphoserine mark. Lys75 participates in a covalent cross-link: Glycyl lysine isopeptide (Lys-Gly) (interchain with G-Cter in SUMO2). Residues 79-142 (KKKKNLNRSG…GYKVSPGRPP (64 aa)) form a disordered region. Basic residues predominate over residues 80–92 (KKKNLNRSGKRGR). Positions 94-107 (SGTTKSAGYRTSTG) are enriched in polar residues. Residues Ser121 and Ser180 each carry the phosphoserine modification. A Glycyl lysine isopeptide (Lys-Gly) (interchain with G-Cter in SUMO2) cross-link involves residue Lys184.

Belongs to the UPF0461 family.

The sequence is that of UPF0461 protein C5orf24 homolog from Bos taurus (Bovine).